The chain runs to 1568 residues: MSFEVGTRCWYPHKELGWIGAEVIKNEVKDGKYHLELSLEDDEVVSVDTEDLNDDKNQSLPLLRNPPILEATEDLTSLSYLNEPAVLHAIKQRYSQLNIYTYSGIVLIATNPFDRVDQLYTQDMIQAYAGKRRGELEPHLFAIAEEAYRLMKNDKQNQTIVVSGESGAGKTVSAKYIMRYFASVEEENSTTIQHQVEMSETEQRILATNPIMEAFGNAKTTRNDNSSRFGKYLEILFDKETSIIGARIRTYLLERSRLVYQPPIERNYHIFYQLMAGLPAQTKEELHLTDASDYFYMNQGGDTKIAGIDDAEEYQTTVDALTLVGITTATQHQIFKILAALLHIGNIEIKKTRNDASLSADEPSLKLACELLGIDSYNFAKWITKKQIVTRSEKIVSNLNFNQAMVAKDSVAKFIYSALFDWLVENINTVLCNPDVDDQINSFIGVLDIYGFEHFEKNSFEQFCINYANEKLQQEFNQHVFKLEQEEYVAEEIEWSFIEFNDNQPCIDLIENKLGILSLLDEESRLPAGSDESWTQKLYQTLDKSPTNEVFSKPRFGQTKFIVSHYALDVAYDVEGFIEKNRDTVSDGHLEVLKASTNETLINILEGLENAAKKLEETKKAELEQNNPGNKKPGPARTVNRKPTLGSMFKQSLIELMSTINSTNVHYIRCIKPNADKEAWQFDNLMVLSQLRACGVLETIRISCAGFPSRWTFEEFVLRYYILIPHEEWDLIFQKKETTEDDIISVVKMILDATVKDKTKYQIGNTKIFFKAGMLAYLEKLRSNKMHNSIVTIQKKIRAKYYRNQYLKISQAIKIWQSNTRGFIIRHRVYHEMKVHSATLIQATYRGYAIRKNVFNVLITIINLQTRIREELKRKQLKREHEYNAAVTIQSKVRTFEPRSTFLNTKRDTVVVQSLIRRRAAQGRLRQLKSDAKSVHHLKEVSYKLENKVIELTQNLASKVKENKEMTERIKELQVQVEESAKLQETLENMKKEHLVNIDNQKNKDMELQKTIEDNLQSTEQNLKNAQLELEEMVKQHNELKEESRKQLDELDETKKALVEHQTLNGDLQNEVKSLKEEISRLQTAMSLGTVTTSVLPQTPLKDVMGGSTANYNSLMLDNAELSPGKSRTTPMSGNHIDSLNIDQDNGANATQINEELYRLLEDTEILNQEITEGLLKGFEVPDAGVAIQLSKRDVVYPARILIIVLSEMWRFGLTKQSESFLAQVLTTIQKVVTQLKGNDLIPSGVFWLANVRELYSFVVFALNSILTEETFKNGMTDEEYKEYVSLVTELKDDFEALSYNIYNIWLKKLQKQLQKKAINAVVISESLPGFSAGETSGFLNKIFANTEEYTMDDILTFFNSIYWCMKSFHIETEVFHAVVTTLLNYVDAICFNELIMKRNFLSWKRGLQLNYNVTRLEEWCKTHGLTGGTECLQHLIQTAKLLQVRKYTIEDIDILRGICYSLTPAQLQKLISQYQVADYESPIPQEILRYVADIVKKEAALSNDSKGHEHSSGIFITPETGPFTDPFSLIKTRKFDQVEAYIPAWLSLPATKRIVDLVAQQVVQDGH.

Residues 4-57 (EVGTRCWYPHKELGWIGAEVIKNEVKDGKYHLELSLEDDEVVSVDTEDLNDDKN) enclose the Myosin N-terminal SH3-like domain. The Myosin motor domain occupies 70–783 (EATEDLTSLS…MLAYLEKLRS (714 aa)). ATP is bound at residue 164-171 (GESGAGKT). Positions 443-523 (FIGVLDIYGF…LGILSLLDEE (81 aa)) are actin-binding. A disordered region spans residues 619-641 (KKAELEQNNPGNKKPGPARTVNR). 6 consecutive IQ domains span residues 786 to 808 (MHNS…QYLK), 809 to 833 (ISQA…YHEM), 834 to 856 (KVHS…NVFN), 857 to 881 (VLIT…KREH), 882 to 904 (EYNA…TFLN), and 905 to 934 (TKRD…DAKS). Residues 944-1088 (KLENKVIELT…ISRLQTAMSL (145 aa)) adopt a coiled-coil conformation. The interval 1089-1568 (GTVTTSVLPQ…VAQQVVQDGH (480 aa)) is non alpha-helical, tail domain. A Dilute domain is found at 1223–1498 (AQVLTTIQKV…LRYVADIVKK (276 aa)).

This sequence belongs to the TRAFAC class myosin-kinesin ATPase superfamily. Myosin family. In terms of assembly, homodimer. Interacts with calmodulin (CMD1) and the myosin light chain MLC1 through its IQ repeats.

Functionally, myosin heavy chain that is required for the cell cycle-regulated transport of various organelles and proteins for their segregation. Functions by binding with its tail domain to receptor proteins on organelles and exerting force with its N-terminal motor domain against actin filaments, thereby transporting its cargo along polarized actin cables. In Saccharomyces uvarum (strain ATCC 76518 / CBS 7001 / CLIB 283 / NBRC 10550 / MCYC 623 / NCYC 2669 / NRRL Y-11845) (Yeast), this protein is Myosin-2 (MYO2).